Consider the following 285-residue polypeptide: Urease accessory protein UreD (285 aa).

Belongs to the UreD family. In terms of assembly, ureD, UreF and UreG form a complex that acts as a GTP-hydrolysis-dependent molecular chaperone, activating the urease apoprotein by helping to assemble the nickel containing metallocenter of UreC. The UreE protein probably delivers the nickel.

Its subcellular location is the cytoplasm. Its function is as follows. Required for maturation of urease via the functional incorporation of the urease nickel metallocenter. In Azoarcus sp. (strain BH72), this protein is Urease accessory protein UreD.